The primary structure comprises 440 residues: UDP-N-acetylglucosamine 1-carboxyvinyltransferase 1 (440 aa).

22-23 is a binding site for phosphoenolpyruvate; it reads KN. Arg93 is a UDP-N-acetyl-alpha-D-glucosamine binding site. The active-site Proton donor is the Cys117. A 2-(S-cysteinyl)pyruvic acid O-phosphothioketal modification is found at Cys117. UDP-N-acetyl-alpha-D-glucosamine contacts are provided by residues 122–126, Asp306, and Val328; that span reads RPIDQ.

Belongs to the EPSP synthase family. MurA subfamily.

It localises to the cytoplasm. It carries out the reaction phosphoenolpyruvate + UDP-N-acetyl-alpha-D-glucosamine = UDP-N-acetyl-3-O-(1-carboxyvinyl)-alpha-D-glucosamine + phosphate. The protein operates within cell wall biogenesis; peptidoglycan biosynthesis. In terms of biological role, cell wall formation. Adds enolpyruvyl to UDP-N-acetylglucosamine. The sequence is that of UDP-N-acetylglucosamine 1-carboxyvinyltransferase 1 from Halalkalibacterium halodurans (strain ATCC BAA-125 / DSM 18197 / FERM 7344 / JCM 9153 / C-125) (Bacillus halodurans).